A 76-amino-acid polypeptide reads, in one-letter code: MRRTVPRGTLRKIIKKHKPHLRLAANTDLLVHLSFLLFLHRLAEEARTNAFENKSKIIKPEHTIAAAKVILKKSRG.

This sequence belongs to the CENP-W/WIP1 family. As to quaternary structure, heterodimer with CENPT; this dimer coassembles with CENPS-CENPX heterodimers at centromeres to form the tetrameric CENP-T-W-S-X complex, which is a subcomplex of the large constitutive centromere-associated network (CCAN, also known as the interphase centromere complex or ICEN). Interacts with NPM1.

The protein localises to the nucleus. Its subcellular location is the chromosome. It localises to the centromere. The protein resides in the kinetochore. Its function is as follows. Component of the CENPA-NAC (nucleosome-associated) complex, a complex that plays a central role in assembly of kinetochore proteins, mitotic progression and chromosome segregation. The CENPA-NAC complex recruits the CENPA-CAD (nucleosome distal) complex and may be involved in incorporation of newly synthesized CENPA into centromeres. Part of a nucleosome-associated complex that binds specifically to histone H3-containing nucleosomes at the centromere, as opposed to nucleosomes containing CENPA. Component of the heterotetrameric CENP-T-W-S-X complex that binds and supercoils DNA, and plays an important role in kinetochore assembly. CENPW has a fundamental role in kinetochore assembly and function. It is one of the inner kinetochore proteins, with most further proteins binding downstream. Required for normal chromosome organization and normal progress through mitosis. The protein is Centromere protein W (CENPW) of Gallus gallus (Chicken).